The chain runs to 454 residues: Bifunctional protein GlmU (454 aa).

The pyrophosphorylase stretch occupies residues 1 to 230; sequence MSGRFAVILA…LSETMGVNDR (230 aa). Residues 9–12, lysine 23, glutamine 73, and 78–79 contribute to the UDP-N-acetyl-alpha-D-glucosamine site; these read LAAG and GT. Residue aspartate 103 coordinates Mg(2+). Residues glycine 140, glutamate 155, asparagine 170, and asparagine 228 each coordinate UDP-N-acetyl-alpha-D-glucosamine. Asparagine 228 contributes to the Mg(2+) binding site. The segment at 231-251 is linker; it reads VALSQAEAAMRKRINEEWMRQ. The interval 252–454 is N-acetyltransferase; it reads GVTIIDPQTT…NKDNYVKKDV (203 aa). The UDP-N-acetyl-alpha-D-glucosamine site is built by arginine 333 and lysine 351. Histidine 363 serves as the catalytic Proton acceptor. Residues tyrosine 366 and asparagine 377 each coordinate UDP-N-acetyl-alpha-D-glucosamine. Acetyl-CoA contacts are provided by residues 386 to 387, serine 405, alanine 423, and arginine 440; that span reads NY.

The protein in the N-terminal section; belongs to the N-acetylglucosamine-1-phosphate uridyltransferase family. This sequence in the C-terminal section; belongs to the transferase hexapeptide repeat family. In terms of assembly, homotrimer. The cofactor is Mg(2+).

It is found in the cytoplasm. The catalysed reaction is alpha-D-glucosamine 1-phosphate + acetyl-CoA = N-acetyl-alpha-D-glucosamine 1-phosphate + CoA + H(+). It catalyses the reaction N-acetyl-alpha-D-glucosamine 1-phosphate + UTP + H(+) = UDP-N-acetyl-alpha-D-glucosamine + diphosphate. It functions in the pathway nucleotide-sugar biosynthesis; UDP-N-acetyl-alpha-D-glucosamine biosynthesis; N-acetyl-alpha-D-glucosamine 1-phosphate from alpha-D-glucosamine 6-phosphate (route II): step 2/2. Its pathway is nucleotide-sugar biosynthesis; UDP-N-acetyl-alpha-D-glucosamine biosynthesis; UDP-N-acetyl-alpha-D-glucosamine from N-acetyl-alpha-D-glucosamine 1-phosphate: step 1/1. The protein operates within bacterial outer membrane biogenesis; LPS lipid A biosynthesis. In terms of biological role, catalyzes the last two sequential reactions in the de novo biosynthetic pathway for UDP-N-acetylglucosamine (UDP-GlcNAc). The C-terminal domain catalyzes the transfer of acetyl group from acetyl coenzyme A to glucosamine-1-phosphate (GlcN-1-P) to produce N-acetylglucosamine-1-phosphate (GlcNAc-1-P), which is converted into UDP-GlcNAc by the transfer of uridine 5-monophosphate (from uridine 5-triphosphate), a reaction catalyzed by the N-terminal domain. The protein is Bifunctional protein GlmU of Shouchella clausii (strain KSM-K16) (Alkalihalobacillus clausii).